The primary structure comprises 269 residues: UPF0494 membrane protein C1348.01 (269 aa).

4 helical membrane passes run 107 to 127 (WPLLIIWSIIIVFAVDKKFEV), 144 to 164 (IWVPIAIYVCLLVLMLLSLIF), 177 to 197 (GVIIAVLGMIIAVLGMIIAAL), and 201 to 221 (ITGLLYFGHWALYKLVILSLG).

This sequence belongs to the UPF0494 family.

It is found in the vacuole membrane. This chain is UPF0494 membrane protein C1348.01, found in Schizosaccharomyces pombe (strain 972 / ATCC 24843) (Fission yeast).